A 200-amino-acid polypeptide reads, in one-letter code: Cuticle protein 19.8 (200 aa).

3 consecutive repeat copies span residues 20-23 (AAPA), 26-29 (AAPA), and 43-46 (AAPA). The region spanning 56–127 (HPQYSYGYSV…EPGVHAPIAA (72 aa)) is the Chitin-binding type R&amp;R domain. Residues 70 to 89 (TGDSKSQQESRDGDVVQGSY) form a disordered region. 5 consecutive repeat copies span residues 126–129 (AAPV), 144–147 (AAPA), 150–153 (AAPV), 159–162 (AAPA), and 177–180 (AAPA).

In terms of biological role, component of the cuticle of migratory locust which contains more than 100 different structural proteins. This Locusta migratoria (Migratory locust) protein is Cuticle protein 19.8.